A 226-amino-acid chain; its full sequence is Ribonuclease 3 (226 aa).

Residues 5–127 (IFQRGDPIGH…IVAAIYLDCG (123 aa)) form the RNase III domain. Glutamate 40 serves as a coordination point for Mg(2+). The active site involves aspartate 44. Mg(2+) contacts are provided by aspartate 113 and glutamate 116. The active site involves glutamate 116. The DRBM domain maps to 154 to 224 (DPKTRLQEWL…ATLVIAQLDS (71 aa)).

The protein belongs to the ribonuclease III family. As to quaternary structure, homodimer. Mg(2+) serves as cofactor.

It is found in the cytoplasm. The catalysed reaction is Endonucleolytic cleavage to 5'-phosphomonoester.. Digests double-stranded RNA. Involved in the processing of primary rRNA transcript to yield the immediate precursors to the large and small rRNAs (23S and 16S). Processes some mRNAs, and tRNAs when they are encoded in the rRNA operon. Processes pre-crRNA and tracrRNA of type II CRISPR loci if present in the organism. This Xanthomonas oryzae pv. oryzae (strain KACC10331 / KXO85) protein is Ribonuclease 3.